The sequence spans 161 residues: Cuticle protein 16.8 (161 aa).

Gln-1 is modified (pyrrolidone carboxylic acid). The span at 1-10 (QSEPAGPPQP) shows a compositional bias: pro residues. Disordered regions lie at residues 1-44 (QSEP…YSYT) and 67-103 (ETNEPGTKTSNPADAQIVSNAATDSYSPSPASSPAKP). Residues 8–74 (PQPYTFSYDN…TVETNEPGTK (67 aa)) form the Chitin-binding type R&amp;R domain. Positions 67-86 (ETNEPGTKTSNPADAQIVSN) are enriched in polar residues. Over residues 87–103 (AATDSYSPSPASSPAKP) the composition is skewed to low complexity.

Component of the cuticle of the tick. Binds chitin. This Ixodes ricinus (Common tick) protein is Cuticle protein 16.8.